The chain runs to 509 residues: Kynureninase 1 (509 aa).

Pyridoxal 5'-phosphate-binding positions include Leu-154, Thr-155, 183-186 (FPSD), Asp-270, His-273, and Tyr-295. Lys-296 is subject to N6-(pyridoxal phosphate)lysine. Residues Trp-345 and Asn-373 each coordinate pyridoxal 5'-phosphate.

It belongs to the kynureninase family. In terms of assembly, homodimer. The cofactor is pyridoxal 5'-phosphate.

Its subcellular location is the cytoplasm. The catalysed reaction is L-kynurenine + H2O = anthranilate + L-alanine + H(+). The enzyme catalyses 3-hydroxy-L-kynurenine + H2O = 3-hydroxyanthranilate + L-alanine + H(+). It participates in amino-acid degradation; L-kynurenine degradation; L-alanine and anthranilate from L-kynurenine: step 1/1. It functions in the pathway cofactor biosynthesis; NAD(+) biosynthesis; quinolinate from L-kynurenine: step 2/3. Catalyzes the cleavage of L-kynurenine (L-Kyn) and L-3-hydroxykynurenine (L-3OHKyn) into anthranilic acid (AA) and 3-hydroxyanthranilic acid (3-OHAA), respectively. In Chaetomium globosum (strain ATCC 6205 / CBS 148.51 / DSM 1962 / NBRC 6347 / NRRL 1970) (Soil fungus), this protein is Kynureninase 1.